The primary structure comprises 641 residues: Chaperone protein DnaK (641 aa).

Threonine 198 carries the phosphothreonine; by autocatalysis modification. Basic and acidic residues-rich tracts occupy residues 514-529, 540-554, and 608-621; these read AEANAEADKKRREGVE, SSEKSLQEHGDKVSE, and AHADAAADAKRSGD. Disordered regions lie at residues 514–554 and 604–641; these read AEAN…KVSE and QTESAHADAAADAKRSGDDVVDADYEEVKDEDDRKRSA. Positions 622 to 633 are enriched in acidic residues; it reads DVVDADYEEVKD.

It belongs to the heat shock protein 70 family.

Functionally, acts as a chaperone. This chain is Chaperone protein DnaK, found in Sinorhizobium medicae (strain WSM419) (Ensifer medicae).